The following is a 130-amino-acid chain: Small ribosomal subunit protein uS8 (130 aa).

It belongs to the universal ribosomal protein uS8 family. In terms of assembly, part of the 30S ribosomal subunit.

In terms of biological role, one of the primary rRNA binding proteins, it binds directly to 16S rRNA central domain where it helps coordinate assembly of the platform of the 30S subunit. The protein is Small ribosomal subunit protein uS8 of Methanosphaera stadtmanae (strain ATCC 43021 / DSM 3091 / JCM 11832 / MCB-3).